Here is a 245-residue protein sequence, read N- to C-terminus: TPR repeat-containing protein PA4299 (245 aa).

Residues 1 to 16 (MKALIGIGLCAALLGG) form the signal peptide. C17 is lipidated: N-palmitoyl cysteine. C17 carries S-diacylglycerol cysteine lipidation. TPR repeat units follow at residues 100–133 (PEAH…RPTE), 135–167 (RFRN…QQGG), and 169–200 (LPAT…DARD). Residues 210–245 (SWGAVPTPGAAPASDDPLAELPAEANMHTAMANEAP) are disordered.

The protein resides in the cell membrane. This is TPR repeat-containing protein PA4299 from Pseudomonas aeruginosa (strain ATCC 15692 / DSM 22644 / CIP 104116 / JCM 14847 / LMG 12228 / 1C / PRS 101 / PAO1).